Here is a 1059-residue protein sequence, read N- to C-terminus: Carbamoyl phosphate synthase large chain (1059 aa).

The carboxyphosphate synthetic domain stretch occupies residues 1–401; sequence MPKRTDIHKI…ALLKAVASLE (401 aa). 12 residues coordinate ATP: Arg129, Arg169, Gly175, Gly176, Lys208, Ile210, Glu215, Gly241, Ile242, His243, Gln284, and Glu298. The ATP-grasp 1 domain maps to 133 to 327; the sequence is KELMQELGEP…IAKLAAKIAV (195 aa). Positions 284, 298, and 300 each coordinate Mg(2+). 3 residues coordinate Mn(2+): Gln284, Glu298, and Asn300. Positions 402–546 are oligomerization domain; it reads IDQKDLLSKE…YSTYETENES (145 aa). Positions 547-929 are carbamoyl phosphate synthetic domain; that stretch reads RRSAKPSVLV…ALYKAFAGAG (383 aa). In terms of domain architecture, ATP-grasp 2 spans 671-861; that stretch reads DQVIKDLNLR…MAQLATKVIL (191 aa). Arg707, Ala746, Leu748, Glu752, Gly777, Val778, His779, Ser780, Gln820, and Glu832 together coordinate ATP. Residues Gln820, Glu832, and Asn834 each coordinate Mg(2+). Positions 820, 832, and 834 each coordinate Mn(2+). Residues 930–1059 form the MGS-like domain; it reads MEVPDNGAVL…EMTSFKTTEL (130 aa). The interval 930–1059 is allosteric domain; it reads MEVPDNGAVL…EMTSFKTTEL (130 aa).

The protein belongs to the CarB family. As to quaternary structure, composed of two chains; the small (or glutamine) chain promotes the hydrolysis of glutamine to ammonia, which is used by the large (or ammonia) chain to synthesize carbamoyl phosphate. Tetramer of heterodimers (alpha,beta)4. Mg(2+) serves as cofactor. It depends on Mn(2+) as a cofactor.

The catalysed reaction is hydrogencarbonate + L-glutamine + 2 ATP + H2O = carbamoyl phosphate + L-glutamate + 2 ADP + phosphate + 2 H(+). It carries out the reaction hydrogencarbonate + NH4(+) + 2 ATP = carbamoyl phosphate + 2 ADP + phosphate + 2 H(+). It functions in the pathway amino-acid biosynthesis; L-arginine biosynthesis; carbamoyl phosphate from bicarbonate: step 1/1. Its pathway is pyrimidine metabolism; UMP biosynthesis via de novo pathway; (S)-dihydroorotate from bicarbonate: step 1/3. In terms of biological role, large subunit of the glutamine-dependent carbamoyl phosphate synthetase (CPSase). CPSase catalyzes the formation of carbamoyl phosphate from the ammonia moiety of glutamine, carbonate, and phosphate donated by ATP, constituting the first step of 2 biosynthetic pathways, one leading to arginine and/or urea and the other to pyrimidine nucleotides. The large subunit (synthetase) binds the substrates ammonia (free or transferred from glutamine from the small subunit), hydrogencarbonate and ATP and carries out an ATP-coupled ligase reaction, activating hydrogencarbonate by forming carboxy phosphate which reacts with ammonia to form carbamoyl phosphate. This chain is Carbamoyl phosphate synthase large chain, found in Limosilactobacillus fermentum (strain NBRC 3956 / LMG 18251) (Lactobacillus fermentum).